Consider the following 346-residue polypeptide: Protein RecA (346 aa).

67 to 74 contacts ATP; the sequence is GPESSGKT.

This sequence belongs to the RecA family.

It is found in the cytoplasm. Functionally, can catalyze the hydrolysis of ATP in the presence of single-stranded DNA, the ATP-dependent uptake of single-stranded DNA by duplex DNA, and the ATP-dependent hybridization of homologous single-stranded DNAs. It interacts with LexA causing its activation and leading to its autocatalytic cleavage. This chain is Protein RecA, found in Mycobacterium ulcerans (strain Agy99).